We begin with the raw amino-acid sequence, 464 residues long: MDYLPLFHNLKGRRVLLVGGGEIALRKARLLADAGAVLRVVAPQIEAALAEQVREGGGDCLPRGYAQGDLDGCVLAIAATDDPLLNARVSRDAHEHGVPVNVVDSPELCSVIFPAIVDRSPLLVAVSSGGDAPVLARLMRARIETWIPAGYGRLAGLARRFRAQVKRLLPDVRQRRVFWEEVFQGPIAERLLSGQETEAERLLEAKLAGAAPKALGEVYLVGAGPGDPDLLTFRALRLMQQADVVLYDRLVAPAIVELCRRDAERIYVGKRRAEHALPQEQINRLLVRLAGEGKRVLRLKGGDPFIFGRGGEEIEELAAHGIPFQVVPGITAASGCAAYAGIPLTHRDHAQSVRFVTGHLKDGSFDLPWADLVAPAQTLVVYMGLVGLPVICQRLIEHGRAAATPVALIQQGTTPQQRVIVSTLAELPARVEREQVSAPTLLIVGEVVRLRDKLAWFEGRQSAD.

The segment at 1 to 203 (MDYLPLFHNL…GQETEAERLL (203 aa)) is precorrin-2 dehydrogenase /sirohydrochlorin ferrochelatase. NAD(+)-binding positions include 22-23 (EI) and 43-44 (PQ). S128 bears the Phosphoserine mark. The uroporphyrinogen-III C-methyltransferase stretch occupies residues 216 to 464 (GEVYLVGAGP…AWFEGRQSAD (249 aa)). An S-adenosyl-L-methionine-binding site is contributed by P225. D248 acts as the Proton acceptor in catalysis. K270 acts as the Proton donor in catalysis. S-adenosyl-L-methionine is bound by residues 301 to 303 (GGD), I306, 331 to 332 (TA), M383, and G412.

This sequence in the N-terminal section; belongs to the precorrin-2 dehydrogenase / sirohydrochlorin ferrochelatase family. The protein in the C-terminal section; belongs to the precorrin methyltransferase family.

It carries out the reaction uroporphyrinogen III + 2 S-adenosyl-L-methionine = precorrin-2 + 2 S-adenosyl-L-homocysteine + H(+). It catalyses the reaction precorrin-2 + NAD(+) = sirohydrochlorin + NADH + 2 H(+). The catalysed reaction is siroheme + 2 H(+) = sirohydrochlorin + Fe(2+). It functions in the pathway cofactor biosynthesis; adenosylcobalamin biosynthesis; precorrin-2 from uroporphyrinogen III: step 1/1. It participates in cofactor biosynthesis; adenosylcobalamin biosynthesis; sirohydrochlorin from precorrin-2: step 1/1. Its pathway is porphyrin-containing compound metabolism; siroheme biosynthesis; precorrin-2 from uroporphyrinogen III: step 1/1. The protein operates within porphyrin-containing compound metabolism; siroheme biosynthesis; siroheme from sirohydrochlorin: step 1/1. It functions in the pathway porphyrin-containing compound metabolism; siroheme biosynthesis; sirohydrochlorin from precorrin-2: step 1/1. In terms of biological role, multifunctional enzyme that catalyzes the SAM-dependent methylations of uroporphyrinogen III at position C-2 and C-7 to form precorrin-2 via precorrin-1. Then it catalyzes the NAD-dependent ring dehydrogenation of precorrin-2 to yield sirohydrochlorin. Finally, it catalyzes the ferrochelation of sirohydrochlorin to yield siroheme. The protein is Siroheme synthase of Azotobacter vinelandii (strain DJ / ATCC BAA-1303).